Here is a 380-residue protein sequence, read N- to C-terminus: Protein arginine N-methyltransferase PRMT10 (380 aa).

Residues 26–357 form the SAM-dependent MTase PRMT-type domain; it reads EVDFANYFCT…KENHRLMDME (332 aa). Residues Q42, R51, G75, E97, and E126 each coordinate S-adenosyl-L-methionine. Catalysis depends on residues E140 and E149. Residues 187-227 are dimerization arm; sequence ENKMEDLEIAMHDWNLFVEDTESYYGVNMNVLTKAYRAEHE.

This sequence belongs to the class I-like SAM-binding methyltransferase superfamily. Protein arginine N-methyltransferase family. As to quaternary structure, ring-like homodimer.

The catalysed reaction is L-arginyl-[protein] + 2 S-adenosyl-L-methionine = N(omega),N(omega)-dimethyl-L-arginyl-[protein] + 2 S-adenosyl-L-homocysteine + 2 H(+). Methylates (mono and asymmetric dimethylation) the guanidino nitrogens of arginyl residues in some proteins. In Oryza sativa subsp. japonica (Rice), this protein is Protein arginine N-methyltransferase PRMT10 (PRMT10).